The primary structure comprises 340 residues: Anthranilate phosphoribosyltransferase (340 aa).

Residues Gly80, 83 to 84, Thr88, 90 to 93, 108 to 116, and Ser120 each bind 5-phospho-alpha-D-ribose 1-diphosphate; these read GD, NIST, and KHGNRAMSS. Gly80 lines the anthranilate pocket. Ser92 serves as a coordination point for Mg(2+). Anthranilate is bound at residue Asn111. Arg166 contributes to the anthranilate binding site. Asp225 and Glu226 together coordinate Mg(2+).

It belongs to the anthranilate phosphoribosyltransferase family. In terms of assembly, homodimer. Requires Mg(2+) as cofactor.

The catalysed reaction is N-(5-phospho-beta-D-ribosyl)anthranilate + diphosphate = 5-phospho-alpha-D-ribose 1-diphosphate + anthranilate. The protein operates within amino-acid biosynthesis; L-tryptophan biosynthesis; L-tryptophan from chorismate: step 2/5. Catalyzes the transfer of the phosphoribosyl group of 5-phosphorylribose-1-pyrophosphate (PRPP) to anthranilate to yield N-(5'-phosphoribosyl)-anthranilate (PRA). In Chloroflexus aggregans (strain MD-66 / DSM 9485), this protein is Anthranilate phosphoribosyltransferase.